The chain runs to 448 residues: Nicotinate phosphoribosyltransferase pncB1 (448 aa).

A disordered region spans residues 1–21 (MGPPPAARRREGEPDNQDPAG). His-212 carries the phosphohistidine modification. The disordered stretch occupies residues 353–372 (RSSYKESPGGRKEALRRSRA).

It belongs to the NAPRTase family. Transiently phosphorylated on a His residue during the reaction cycle. Phosphorylation strongly increases the affinity for substrates and increases the rate of nicotinate D-ribonucleotide production. Dephosphorylation regenerates the low-affinity form of the enzyme, leading to product release.

It carries out the reaction nicotinate + 5-phospho-alpha-D-ribose 1-diphosphate + ATP + H2O = nicotinate beta-D-ribonucleotide + ADP + phosphate + diphosphate. Its pathway is cofactor biosynthesis; NAD(+) biosynthesis; nicotinate D-ribonucleotide from nicotinate: step 1/1. Its function is as follows. Involved in the Preiss-Handler pathway, which is a recycling route that permits the salvage of free nicotinamide (NM) and nicotinic acid (Na) involved in the NAD biosynthesis. Catalyzes the synthesis of beta-nicotinate D-ribonucleotide from nicotinate and 5-phospho-D-ribose 1-phosphate at the expense of ATP. It is not able to use nicotinamide. PncB1 contributes to basal NAD level. The sequence is that of Nicotinate phosphoribosyltransferase pncB1 (pncB1) from Mycobacterium tuberculosis (strain ATCC 25618 / H37Rv).